The primary structure comprises 997 residues: Disease resistance protein RML1A (997 aa).

Residues 12 to 176 (WRYRVFTSFH…KIARDVSEKL (165 aa)) form the TIR domain. Glutamate 87 is a catalytic residue. The NB-ARC domain occupies 191–447 (EAHLRKIQSL…HIAIFFNYED (257 aa)). LRR repeat units follow at residues 194–218 (LRKIQSLLDLDNDEVKMVAISGPAG), 534–557 (TSGINEVSISNKALRRMCNLRFLS), 600–623 (AENLVELDMKDSRLEYLWPGTQLL), 624–647 (TKLKKLNLEGSYNLKELPDLSNAT), 649–670 (LEMLDLSVCLALAELPSSIKNL), 671–693 (HKLDVIYMDLCESLHMIPTNINL), 694–714 (ASLETMYMTGCPQLKTFPAFS), 715–737 (TKIKRLYLVRTGVEEVPASITHC), 758–781 (PSSLQTLDLSSTDIEMIADSCIKD), and 783–808 (QRLDHLRLCRCRKLKSLPELPASLRL).

It carries out the reaction NAD(+) + H2O = ADP-D-ribose + nicotinamide + H(+). Its function is as follows. TIR-NB-LRR receptor-like protein that confers resistance to the pathogen Leptosphaeria maculans (blackleg disease). This chain is Disease resistance protein RML1A, found in Arabidopsis thaliana (Mouse-ear cress).